The chain runs to 309 residues: Syndecan-1 (309 aa).

Residues 1-22 (MRRAALWLWLCALALRLQPVLP) form the signal peptide. At 23-253 (QIVTVNVPPE…GLLDRKEVLG (231 aa)) the chain is on the extracellular side. Disordered regions lie at residues 28–57 (NVPP…DITL) and 145–185 (TTAQ…GGTS). A compositionally biased stretch (acidic residues) spans 32–42 (EDQDGSGDDSD). O-linked (Xyl...) (chondroitin sulfate) serine glycosylation is present at serine 37. Asparagine 43 is a glycosylation site (N-linked (GlcNAc...) asparagine). Residues serine 45 and serine 47 are each glycosylated (O-linked (Xyl...) (heparan sulfate) serine). Residues 173–183 (GQPDQQPPSGG) are compositionally biased toward low complexity. 2 O-linked (Xyl...) (chondroitin sulfate) serine glycosylation sites follow: serine 205 and serine 215. Residues 254 to 274 (GVIAGGLVGLIFAVCLVGFML) form a helical membrane-spanning segment. Residues 275–309 (YRMKKKDEGSYSLEEPKQANGGAYQKPTKQEEFYA) are Cytoplasmic-facing. A disordered region spans residues 283-309 (GSYSLEEPKQANGGAYQKPTKQEEFYA). The residue at position 284 (serine 284) is a Phosphoserine.

The protein belongs to the syndecan proteoglycan family. In terms of assembly, interacts with CDCP1. Interacts (via C-terminus) with TIAM1 (via PDZ domain). Interacts with MDK. Post-translationally, shedding is enhanced by a number of factors such as heparanase, thrombin or EGF. Also by stress and wound healing. PMA-mediated shedding is inhibited by TIMP3.

Its subcellular location is the membrane. It localises to the secreted. It is found in the extracellular exosome. In terms of biological role, cell surface proteoglycan that contains both heparan sulfate and chondroitin sulfate and that links the cytoskeleton to the interstitial matrix. Regulates exosome biogenesis in concert with SDCBP and PDCD6IP. Able to induce its own expression in dental mesenchymal cells and also in the neighboring dental epithelial cells via an MSX1-mediated pathway. The sequence is that of Syndecan-1 from Mesocricetus auratus (Golden hamster).